Here is a 142-residue protein sequence, read N- to C-terminus: rRNA-processing protein FYV7 (142 aa).

Disordered stretches follow at residues 1 to 23 (MHPN…EAKS), 47 to 67 (EGLQ…TKKK), and 99 to 142 (KIES…NEMS). A coiled-coil region spans residues 94-116 (QAKLEKIESNSKERALKREQLKK). Basic and acidic residues-rich tracts occupy residues 99-115 (KIES…EQLK) and 131-142 (DLLDKIKKNEMS).

This sequence belongs to the FYV7 family.

It localises to the nucleus. The protein localises to the nucleolus. Functionally, involved in the processing of the 20S pre-rRNA. In Candida albicans (strain SC5314 / ATCC MYA-2876) (Yeast), this protein is rRNA-processing protein FYV7 (FYV7).